We begin with the raw amino-acid sequence, 133 residues long: Histone H2A (133 aa).

The segment covering 1–10 has biased composition (gly residues); sequence MTGGKSGGKA. The interval 1–25 is disordered; it reads MTGGKSGGKASGSKSSQSRSSKAGL. N6-acetyllysine is present on residues K5 and K9. The segment covering 11 to 24 has biased composition (low complexity); it reads SGSKSSQSRSSKAG. Q106 bears the N5-methylglutamine mark. At S130 the chain carries Phosphoserine. The short motif at 130–131 is the [ST]-Q motif element; that stretch reads SQ.

Belongs to the histone H2A family. In terms of assembly, the nucleosome is a histone octamer containing two molecules each of H2A, H2B, H3 and H4 assembled in one H3-H4 heterotetramer and two H2A-H2B heterodimers. The octamer wraps approximately 147 bp of DNA. Phosphorylated to form H2AS128ph (gamma-H2A) in response to DNA double-strand breaks (DSBs) generated by exogenous genotoxic agents and by stalled replication forks. Phosphorylation is dependent on the DNA damage checkpoint kinases MEC1/ATR and TEL1/ATM, spreads on either side of a detected DSB site and may mark the surrounding chromatin for recruitment of proteins required for DNA damage signaling and repair. Gamma-H2A is removed from the DNA prior to the strand invasion-primer extension step of the repair process and subsequently dephosphorylated. Dephosphorylation is necessary for efficient recovery from the DNA damage checkpoint. Post-translationally, acetylated by ESA1 to form H2AK4ac and H2AK7ac.

Its subcellular location is the nucleus. The protein resides in the chromosome. Core component of nucleosome which plays a central role in DNA double strand break (DSB) repair. Nucleosomes wrap and compact DNA into chromatin, limiting DNA accessibility to the cellular machineries which require DNA as a template. Histones thereby play a central role in transcription regulation, DNA repair, DNA replication and chromosomal stability. DNA accessibility is regulated via a complex set of post-translational modifications of histones, also called histone code, and nucleosome remodeling. This Coccidioides immitis (strain RS) (Valley fever fungus) protein is Histone H2A (HTA1).